The chain runs to 214 residues: Osteoclast-stimulating factor 1 (214 aa).

Residue Ser2 is modified to N-acetylserine. Residues 12–71 (GQVKVFRALYTFEPRTPDELYFEEGDIIYITDMSDTNWWKGTSKGRTGLIPSNYVAEQAE) form the SH3 domain. ANK repeat units follow at residues 72-101 (SIDN…GVNG), 105-135 (AGST…ELNQ), and 139-168 (LGDT…RTDL). Thr200 carries the phosphothreonine modification. A phosphoserine mark is found at Ser202 and Ser213.

In terms of assembly, interacts with SRC and SMN1. Interacts with FASLG.

It localises to the cytoplasm. Its function is as follows. Induces bone resorption, acting probably through a signaling cascade which results in the secretion of factor(s) enhancing osteoclast formation and activity. The protein is Osteoclast-stimulating factor 1 (OSTF1) of Sus scrofa (Pig).